The chain runs to 58 residues: Small integral membrane protein 11 (58 aa).

A helical membrane pass occupies residues 10–32; it reads PLLLYILAAKTLILCLTFAGVKM. The stretch at 29-58 forms a coiled coil; sequence GVKMYQRKRLEAKQQKLEAERKKQSEKKDN.

In terms of tissue distribution, expressed in heart, spleen, liver, stomach, muscle, lung, testis, skin, PBL and bone marrow.

The protein localises to the membrane. The chain is Small integral membrane protein 11 from Homo sapiens (Human).